A 975-amino-acid polypeptide reads, in one-letter code: Translation initiation factor IF-2 (975 aa).

Disordered stretches follow at residues 49-110 and 193-339; these read KLSG…APKA and AAAP…GRGA. Basic residues predominate over residues 63–72; it reads KKTAARKAAP. Low complexity-rich tracts occupy residues 73–94, 193–202, and 209–225; these read KKAA…AKTP, AAAPEAPAPQ, and VVGT…ASAP. The span at 308 to 318 shows a compositional bias: basic and acidic residues; the sequence is GADRGGRDFDK. Residues 324 to 336 are compositionally biased toward low complexity; the sequence is GPSAPAAGPAAAG. A tr-type G domain is found at 469–639; that stretch reads TRPPVVTVMG…KLVAEVAELK (171 aa). The tract at residues 478–485 is G1; the sequence is GHVDHGKT. 478 to 485 lines the GTP pocket; sequence GHVDHGKT. Residues 503 to 507 are G2; that stretch reads GITQH. Residues 525–528 are G3; sequence DTPG. Residues 525-529 and 579-582 each bind GTP; these read DTPGH and NKID. The interval 579 to 582 is G4; it reads NKID. The tract at residues 615 to 617 is G5; that stretch reads SAL.

It belongs to the TRAFAC class translation factor GTPase superfamily. Classic translation factor GTPase family. IF-2 subfamily.

It localises to the cytoplasm. In terms of biological role, one of the essential components for the initiation of protein synthesis. Protects formylmethionyl-tRNA from spontaneous hydrolysis and promotes its binding to the 30S ribosomal subunits. Also involved in the hydrolysis of GTP during the formation of the 70S ribosomal complex. The chain is Translation initiation factor IF-2 from Bdellovibrio bacteriovorus (strain ATCC 15356 / DSM 50701 / NCIMB 9529 / HD100).